The primary structure comprises 306 residues: Recombination-associated protein RdgC (306 aa).

The protein belongs to the RdgC family.

The protein resides in the cytoplasm. The protein localises to the nucleoid. Functionally, may be involved in recombination. The chain is Recombination-associated protein RdgC from Pseudomonas putida (strain GB-1).